The primary structure comprises 387 residues: Galactokinase (387 aa).

33–36 (EHID) serves as a coordination point for substrate. ATP-binding positions include S67 and 124–130 (GAGLSSS). Mg(2+) contacts are provided by S130 and E162. Catalysis depends on D174, which acts as the Proton acceptor. Y224 contacts substrate.

It belongs to the GHMP kinase family. GalK subfamily.

The protein localises to the cytoplasm. The enzyme catalyses alpha-D-galactose + ATP = alpha-D-galactose 1-phosphate + ADP + H(+). The protein operates within carbohydrate metabolism; galactose metabolism. Functionally, catalyzes the transfer of the gamma-phosphate of ATP to D-galactose to form alpha-D-galactose-1-phosphate (Gal-1-P). The polypeptide is Galactokinase (Clostridium perfringens (strain 13 / Type A)).